A 717-amino-acid polypeptide reads, in one-letter code: DNA-binding protein RFX2 (717 aa).

The disordered stretch occupies residues 1 to 28 (MQNSEGGADSPASVALRPAAQPMPASPQ). At Ser26 the chain carries Phosphoserine. Positions 194–269 (HLQWLLDNYE…YHYYGIRLKP (76 aa)) form a DNA-binding region, RFX-type winged-helix. The tract at residues 286-318 (RQQPTHQKPRYRPAQKSDSLGDGSAHSNMHGMP) is disordered. Ser411 is subject to Phosphoserine. Basic and acidic residues predominate over residues 685 to 710 (DGHSSEADVDGRSLGEPLVKRERSDP). The tract at residues 685–717 (DGHSSEADVDGRSLGEPLVKRERSDPSHPLQGI) is disordered.

This sequence belongs to the RFX family. As to quaternary structure, homodimer; probably only forms homodimers in testis. Heterodimer; heterodimerizes with RFX1 and RFX3.

Its subcellular location is the nucleus. The protein localises to the cytoplasm. Functionally, transcription factor that acts as a key regulator of spermatogenesis. Acts by regulating expression of genes required for the haploid phase during spermiogenesis, such as genes required for cilium assembly and function. Recognizes and binds the X-box, a regulatory motif with DNA sequence 5'-GTNRCC(0-3N)RGYAAC-3' present on promoters. Probably activates transcription of the testis-specific histone gene H1-6. The sequence is that of DNA-binding protein RFX2 (Rfx2) from Mus musculus (Mouse).